A 179-amino-acid polypeptide reads, in one-letter code: Large ribosomal subunit protein uL5 (179 aa).

The protein belongs to the universal ribosomal protein uL5 family. In terms of assembly, part of the 50S ribosomal subunit; contacts the 5S rRNA and probably tRNA. Forms a bridge to the 30S subunit in the 70S ribosome.

In terms of biological role, this is one of the proteins that bind and probably mediate the attachment of the 5S RNA into the large ribosomal subunit, where it forms part of the central protuberance. In the 70S ribosome it contacts protein S13 of the 30S subunit (bridge B1b), connecting the 2 subunits; this bridge is implicated in subunit movement. May contact the P site tRNA; the 5S rRNA and some of its associated proteins might help stabilize positioning of ribosome-bound tRNAs. This is Large ribosomal subunit protein uL5 from Pyrobaculum aerophilum (strain ATCC 51768 / DSM 7523 / JCM 9630 / CIP 104966 / NBRC 100827 / IM2).